Here is a 1082-residue protein sequence, read N- to C-terminus: Protein SPT23 (1082 aa).

Disordered stretches follow at residues 315–346 (NASN…PQSD), 376–417 (NNNN…FSDI), and 457–476 (ASAR…FMST). The span at 316 to 328 (ASNTTTPTSTSNA) shows a compositional bias: low complexity. Residues 329-346 (QVSPMTNDTRSFSSPQSD) show a composition bias toward polar residues. 2 stretches are compositionally biased toward low complexity: residues 376-391 (NNNN…KTNT) and 399-416 (HFPS…SFSD). The residue at position 468 (serine 468) is a Phosphoserine. An IPT/TIG domain is found at 508–585 (PSIQRVIPAQ…DPSETSMRNN (78 aa)). ANK repeat units lie at residues 709-738 (RGRT…HLND) and 742-771 (FGFT…NIMK).

Dosage-dependent suppressor of Ty-induced promoter mutations. May exert its suppression effect through protein-protein interactions since does not present any of the motifs generally found in transcriptional activators or DNA binding proteins. The sequence is that of Protein SPT23 (SPT23) from Saccharomyces cerevisiae (strain ATCC 204508 / S288c) (Baker's yeast).